Here is a 308-residue protein sequence, read N- to C-terminus: Aspartate carbamoyltransferase catalytic subunit (308 aa).

The carbamoyl phosphate site is built by Arg57 and Thr58. Lys86 contacts L-aspartate. The carbamoyl phosphate site is built by Arg107, His135, and Gln138. L-aspartate is bound by residues Arg167 and Arg228. Leu267 and Pro268 together coordinate carbamoyl phosphate.

It belongs to the aspartate/ornithine carbamoyltransferase superfamily. ATCase family. Heterooligomer of catalytic and regulatory chains.

It carries out the reaction carbamoyl phosphate + L-aspartate = N-carbamoyl-L-aspartate + phosphate + H(+). It functions in the pathway pyrimidine metabolism; UMP biosynthesis via de novo pathway; (S)-dihydroorotate from bicarbonate: step 2/3. In terms of biological role, catalyzes the condensation of carbamoyl phosphate and aspartate to form carbamoyl aspartate and inorganic phosphate, the committed step in the de novo pyrimidine nucleotide biosynthesis pathway. This chain is Aspartate carbamoyltransferase catalytic subunit, found in Methanococcoides burtonii (strain DSM 6242 / NBRC 107633 / OCM 468 / ACE-M).